The sequence spans 234 residues: Inner membrane protein YbhL (234 aa).

Residues 1 to 23 are Periplasmic-facing; it reads MDRFPRSDSIVQPRAGLQTYMAQ. A helical membrane pass occupies residues 24-44; sequence VYGWMTVGLLLTAFVAWYAAN. The Cytoplasmic segment spans residues 45 to 56; that stretch reads SAAVMELLFTNR. Residues 57–77 form a helical membrane-spanning segment; it reads VFLIGLIIAQLALVIVLSAMI. Residues 78-79 lie on the Periplasmic side of the membrane; that stretch reads QK. Residues 80 to 100 traverse the membrane as a helical segment; sequence LSAGVTTMLFMLYSALTGLTL. Over 101–102 the chain is Cytoplasmic; that stretch reads SS. Residues 103–123 traverse the membrane as a helical segment; that stretch reads IFIVYTAASIASTFVVTAGMF. The Periplasmic portion of the chain corresponds to 124–136; the sequence is GAMSLYGYTTKRD. Residues 137–157 traverse the membrane as a helical segment; it reads LSGFGNMLFMALIGIVLASLV. The Cytoplasmic portion of the chain corresponds to 158 to 163; sequence NFWLKS. A helical transmembrane segment spans residues 164-184; the sequence is EALMWAVTYIGVIVFVGLTAY. The Periplasmic segment spans residues 185–206; it reads DTQKLKNMGEQIDTRDTSNLRK. A helical membrane pass occupies residues 207-227; sequence YSILGALTLYLDFINLFLMLL. The Cytoplasmic segment spans residues 228–234; it reads RIFGNRR.

This sequence belongs to the BI1 family.

It is found in the cell inner membrane. This is Inner membrane protein YbhL (ybhL) from Escherichia coli (strain K12).